The following is a 932-amino-acid chain: 2-oxoglutarate dehydrogenase E1 component (932 aa).

It belongs to the alpha-ketoglutarate dehydrogenase family. As to quaternary structure, homodimer. Part of the 2-oxoglutarate dehydrogenase (OGDH) complex composed of E1 (2-oxoglutarate dehydrogenase), E2 (dihydrolipoamide succinyltransferase) and E3 (dihydrolipoamide dehydrogenase); the complex contains multiple copies of the three enzymatic components (E1, E2 and E3). It depends on thiamine diphosphate as a cofactor.

It catalyses the reaction N(6)-[(R)-lipoyl]-L-lysyl-[protein] + 2-oxoglutarate + H(+) = N(6)-[(R)-S(8)-succinyldihydrolipoyl]-L-lysyl-[protein] + CO2. Functionally, E1 component of the 2-oxoglutarate dehydrogenase (OGDH) complex which catalyzes the decarboxylation of 2-oxoglutarate, the first step in the conversion of 2-oxoglutarate to succinyl-CoA and CO(2). In Staphylococcus aureus (strain bovine RF122 / ET3-1), this protein is 2-oxoglutarate dehydrogenase E1 component.